Reading from the N-terminus, the 382-residue chain is Sialidase (382 aa).

A substrate-binding site is contributed by Arg-37. The active-site Proton acceptor is Asp-62. 3 BNR repeats span residues 71–82 (ARSTDFGKTWSY), 140–151 (IYSDDNGLTWSN), and 208–219 (IYSKDNGETWTM). Arg-245 contributes to the substrate binding site. The stretch at 255-266 (YISHDLGTTWEI) is one BNR 4 repeat. Residue Tyr-347 is the Nucleophile of the active site.

This sequence belongs to the glycosyl hydrolase 33 family.

The protein resides in the secreted. The catalysed reaction is Hydrolysis of alpha-(2-&gt;3)-, alpha-(2-&gt;6)-, alpha-(2-&gt;8)- glycosidic linkages of terminal sialic acid residues in oligosaccharides, glycoproteins, glycolipids, colominic acid and synthetic substrates.. Sialidases have been suggested to be pathogenic factors in microbial infections. The sequence is that of Sialidase (nanH) from Clostridium perfringens.